The primary structure comprises 369 residues: Anhydro-N-acetylmuramic acid kinase (369 aa).

ATP is bound at residue G12 to D19.

Belongs to the anhydro-N-acetylmuramic acid kinase family.

It catalyses the reaction 1,6-anhydro-N-acetyl-beta-muramate + ATP + H2O = N-acetyl-D-muramate 6-phosphate + ADP + H(+). The protein operates within amino-sugar metabolism; 1,6-anhydro-N-acetylmuramate degradation. It participates in cell wall biogenesis; peptidoglycan recycling. In terms of biological role, catalyzes the specific phosphorylation of 1,6-anhydro-N-acetylmuramic acid (anhMurNAc) with the simultaneous cleavage of the 1,6-anhydro ring, generating MurNAc-6-P. Is required for the utilization of anhMurNAc either imported from the medium or derived from its own cell wall murein, and thus plays a role in cell wall recycling. The sequence is that of Anhydro-N-acetylmuramic acid kinase from Shewanella amazonensis (strain ATCC BAA-1098 / SB2B).